The sequence spans 391 residues: Zinc finger protein 414 (391 aa).

A disordered region spans residues 1–110 (MDEEPSGPSL…RRPPPGKQIP (110 aa)). Residues 84 to 93 (GPTSTVSGTS) are compositionally biased toward polar residues. C2H2-type zinc fingers lie at residues 109–133 (IPCS…LRTH), 145–169 (FRCS…GKLH), and 176–201 (FKCE…CAEH). Disordered stretches follow at residues 201-243 (HAQS…LEPF), 274-312 (LAAA…SGHA), and 344-391 (HLED…FSPL). Positions 214 to 226 (LDRESPASERPPE) are enriched in basic and acidic residues. Pro residues predominate over residues 227-236 (SDPAPAPGLP). A compositionally biased stretch (low complexity) spans 274 to 286 (LAAAPGPPASSAA). The C2H2-type 4 zinc-finger motif lies at 326 to 348 (YSCMQCAFSTASRPAMTLHLEDH). Positions 353 to 372 (PAAPAPGQPRPDAPADPAPL) are enriched in pro residues.

The protein belongs to the krueppel C2H2-type zinc-finger protein family.

The protein localises to the nucleus. May be involved in transcriptional regulation. The protein is Zinc finger protein 414 (ZNF414) of Bos taurus (Bovine).